The following is a 553-amino-acid chain: COP9 signalosome complex subunit 10 (553 aa).

The span at 21-46 (AEMEEDSDEMGVYEEETSQGAEEEVP) shows a compositional bias: acidic residues. Residues 21–47 (AEMEEDSDEMGVYEEETSQGAEEEVPL) are disordered. Residues 298 to 474 (LRTHFSACLQ…DYVYFGDEPR (177 aa)) form the PCI domain.

As to quaternary structure, component of a COP9 signalosome-like (CSN) complex.

The protein localises to the cytoplasm. It localises to the nucleus. In terms of biological role, component of the COP9 signalosome (CSN) complex that acts as an regulator of the ubiquitin (Ubl) conjugation pathway by mediating the deneddylation of the cullin subunit of SCF-type E3 ubiquitin-protein ligase complexes. The CSN complex is involved in the regulation of the mating pheromone response. The protein is COP9 signalosome complex subunit 10 (RRI2) of Eremothecium gossypii (strain ATCC 10895 / CBS 109.51 / FGSC 9923 / NRRL Y-1056) (Yeast).